A 621-amino-acid chain; its full sequence is tRNA uridine 5-carboxymethylaminomethyl modification enzyme MnmG (621 aa).

9 to 14 (GGGHAG) is a binding site for FAD. 270–284 (GPRYCPSIEDKIVKF) contacts NAD(+).

It belongs to the MnmG family. Homodimer. Heterotetramer of two MnmE and two MnmG subunits. FAD is required as a cofactor.

The protein resides in the cytoplasm. NAD-binding protein involved in the addition of a carboxymethylaminomethyl (cmnm) group at the wobble position (U34) of certain tRNAs, forming tRNA-cmnm(5)s(2)U34. In Borrelia garinii subsp. bavariensis (strain ATCC BAA-2496 / DSM 23469 / PBi) (Borreliella bavariensis), this protein is tRNA uridine 5-carboxymethylaminomethyl modification enzyme MnmG.